We begin with the raw amino-acid sequence, 1641 residues long: Vitellogenin-1 (1641 aa).

The N-terminal stretch at 1–18 is a signal peptide; the sequence is MWYLAFLLIIGAYAADHA. One can recognise a Vitellogenin domain in the interval 19 to 790; that stretch reads WETGNEYHYL…SQDTTVPKSS (772 aa). C172 and C211 are disulfide-bonded. Polar residues predominate over residues 322–334; that stretch reads LRQPSVSLNSMEA. The segment at 322-372 is disordered; the sequence is LRQPSVSLNSMEARSSENSNEENRSDDDRSNFLSNSGEEREYLQSKPTLNE. Residues 342–351 are compositionally biased toward basic and acidic residues; sequence EENRSDDDRS. N344, N549, N566, N831, N875, N898, N1001, N1053, N1268, N1393, N1396, N1505, and N1523 each carry an N-linked (GlcNAc...) asparagine glycan. Positions 1410-1597 constitute a VWFD domain; that stretch reads ESVCVLDKTH…TYAMTQESCQ (188 aa). An intrachain disulfide couples C1435 to C1596. The tract at residues 1594–1641 is disordered; the sequence is ESCQGPAPENKRKAEQSTCMSRSYRPSDVISDREAGRSSTKNRGWGYH.

In terms of tissue distribution, hemolymph.

Its subcellular location is the secreted. Precursor of the egg-yolk proteins that are sources of nutrients during embryonic development. This Solenopsis invicta (Red imported fire ant) protein is Vitellogenin-1.